Reading from the N-terminus, the 469-residue chain is MTIKTRFAPSPTGFLHVGGARTALYSWLYARANQGEFVLRIEDTDIERSTPEACAAILEGMEWLNLNWDEGPYYQTKRFDRYNEIIAQMLEQGTAYKCYCSRERIETMREEQAANGEQQKYDGCCRDKAPRDTDEPFVVRFKNPTEGSVVFDDHVRGRIEFANSTLDDLIIARTEGTPTYNFCVVVDDWDMGITCVVRGEDHINNTPRQINILKALGAPVPEYAHVAMILGDDGAKLSKRHGAVGVMQYRDDGFLPEALLNYLVRLGWSHGDQEVFSIEEMKQFFSLDDINKAASAFNTDKLIWLNQHYIKEMDPEYVASHLEWHMADQNIDTSNGPKLSEVVSALSERAKTLKELAASSRYFFEDFAEFEETAAKKHLRGVALEPLTLIQSKLAALNEWTLEAIHQAIEDTASELDVGMGKVGMPLRVAVTGAGMSPAVDLTLFLVGKARCEQRISKAIEFVANRVNS.

The 'HIGH' region motif lies at 9–19 (PSPTGFLHVGG). Zn(2+) contacts are provided by cysteine 98, cysteine 100, cysteine 125, and aspartate 127. The 'KMSKS' region motif lies at 236–240 (KLSKR). Lysine 239 serves as a coordination point for ATP.

It belongs to the class-I aminoacyl-tRNA synthetase family. Glutamate--tRNA ligase type 1 subfamily. In terms of assembly, monomer. Requires Zn(2+) as cofactor.

Its subcellular location is the cytoplasm. It carries out the reaction tRNA(Glu) + L-glutamate + ATP = L-glutamyl-tRNA(Glu) + AMP + diphosphate. In terms of biological role, catalyzes the attachment of glutamate to tRNA(Glu) in a two-step reaction: glutamate is first activated by ATP to form Glu-AMP and then transferred to the acceptor end of tRNA(Glu). The sequence is that of Glutamate--tRNA ligase from Shewanella halifaxensis (strain HAW-EB4).